The following is a 270-amino-acid chain: Hydroxyethylthiazole kinase (270 aa).

M47 is a binding site for substrate. ATP contacts are provided by R123 and T169. G196 contributes to the substrate binding site.

It belongs to the Thz kinase family. Requires Mg(2+) as cofactor.

It carries out the reaction 5-(2-hydroxyethyl)-4-methylthiazole + ATP = 4-methyl-5-(2-phosphooxyethyl)-thiazole + ADP + H(+). It participates in cofactor biosynthesis; thiamine diphosphate biosynthesis; 4-methyl-5-(2-phosphoethyl)-thiazole from 5-(2-hydroxyethyl)-4-methylthiazole: step 1/1. Functionally, catalyzes the phosphorylation of the hydroxyl group of 4-methyl-5-beta-hydroxyethylthiazole (THZ). The protein is Hydroxyethylthiazole kinase of Roseiflexus sp. (strain RS-1).